Consider the following 95-residue polypeptide: Small ribosomal subunit protein bS6 (95 aa).

The protein belongs to the bacterial ribosomal protein bS6 family.

Binds together with bS18 to 16S ribosomal RNA. In Corynebacterium urealyticum (strain ATCC 43042 / DSM 7109), this protein is Small ribosomal subunit protein bS6.